Here is a 403-residue protein sequence, read N- to C-terminus: MTEKTYTLEEQLALIQRGAQEILSEEDLVKKLKLNRPLRIKAGFDPTAPDLHLGHTVLINKLKHFQDLGHEIYFLIGDYTAKIGDPSGKNSTRPPLTDEQIKANAETYAEQVFKILDKEKTRVVFNSEWFNDMSAADMIQLASHQTVSRMLERDDFSKRYASQTPIAIHEFLYPLVQGYDSIALKADVELGGTDQTFNLLMGRTLQGRYGQEQQVCITVPILEGLDGVNKMSKSLNNYVGIYDAPGTMYQKLLSMPDTLIRRYFEFLSFKPMEEVENLMAEMEDGRNPQEIKRILAEELIERFHDADAAANAHKSAGNVLADGELPVDLPEVTLELEGQDALFITQILNQAALAKNSSSAKDMIKRGAVKVDGEVVDAGFSLTAGQTVVIQAGKKAYAKVTVD.

Positions 46 to 55 match the 'HIGH' region motif; sequence PTAPDLHLGH. Positions 230-234 match the 'KMSKS' region motif; the sequence is KMSKS. Lysine 233 provides a ligand contact to ATP. The region spanning 342 to 402 is the S4 RNA-binding domain; it reads LFITQILNQA…GKKAYAKVTV (61 aa).

The protein belongs to the class-I aminoacyl-tRNA synthetase family. TyrS type 2 subfamily. Homodimer.

The protein resides in the cytoplasm. It catalyses the reaction tRNA(Tyr) + L-tyrosine + ATP = L-tyrosyl-tRNA(Tyr) + AMP + diphosphate + H(+). Catalyzes the attachment of tyrosine to tRNA(Tyr) in a two-step reaction: tyrosine is first activated by ATP to form Tyr-AMP and then transferred to the acceptor end of tRNA(Tyr). The chain is Tyrosine--tRNA ligase from Psychrobacter arcticus (strain DSM 17307 / VKM B-2377 / 273-4).